Consider the following 500-residue polypeptide: Glycerol kinase (500 aa).

Threonine 13 is a binding site for ADP. ATP is bound by residues threonine 13, threonine 14, and serine 15. Threonine 13 contributes to the sn-glycerol 3-phosphate binding site. Arginine 17 is an ADP binding site. The sn-glycerol 3-phosphate site is built by arginine 83, glutamate 84, tyrosine 135, and aspartate 244. Residues arginine 83, glutamate 84, tyrosine 135, aspartate 244, and glutamine 245 each contribute to the glycerol site. Positions 266 and 309 each coordinate ADP. 4 residues coordinate ATP: threonine 266, glycine 309, glutamine 313, and glycine 410. Residues glycine 410 and asparagine 414 each contribute to the ADP site.

It belongs to the FGGY kinase family.

It catalyses the reaction glycerol + ATP = sn-glycerol 3-phosphate + ADP + H(+). Its pathway is polyol metabolism; glycerol degradation via glycerol kinase pathway; sn-glycerol 3-phosphate from glycerol: step 1/1. Its activity is regulated as follows. Inhibited by fructose 1,6-bisphosphate (FBP). Functionally, key enzyme in the regulation of glycerol uptake and metabolism. Catalyzes the phosphorylation of glycerol to yield sn-glycerol 3-phosphate. The chain is Glycerol kinase from Burkholderia pseudomallei (strain K96243).